The chain runs to 239 residues: Phospholipase A2 (239 aa).

Residues 1–19 form the signal peptide; the sequence is MSLIIVLVISVLSADAVLS. Positions 20 to 105 are excised as a propeptide; it reads MDNELYLNLE…GRCLSVGESE (86 aa). Residues W113, G115, and G117 each coordinate Ca(2+). 5 disulfides stabilise this stretch: C114/C136, C135/C174, C142/C167, C165/C202, and C207/C217. H139 is an active-site residue. Ca(2+) is bound at residue D140. Residues 211–213 constitute a propeptide that is removed on maturation; the sequence is RSP.

The protein belongs to the phospholipase A2 family. Group III subfamily. As to quaternary structure, heterodimer composed of a small subunit and a large subunit; disulfid-linked. The cofactor is Ca(2+). In terms of tissue distribution, expressed by the venom gland.

It localises to the secreted. The catalysed reaction is a 1,2-diacyl-sn-glycero-3-phosphocholine + H2O = a 1-acyl-sn-glycero-3-phosphocholine + a fatty acid + H(+). In terms of biological role, toxic phospholipase A2, which may catalyze the calcium-dependent hydrolysis of the 2-acyl groups in 3-sn-phosphoglycerides. Inhibits both skeletal (RYR1) and cardiac (RYR2) ryanodine receptors (calcium release channels). Probably blocks ryanodine receptors by generating a lipid product. This is Phospholipase A2 from Hoffmannihadrurus gertschi (Scorpion).